The primary structure comprises 189 residues: uncharacterized protein (189 aa).

The 61-residue stretch at Ala-9 to Val-69 folds into the HTH tetR-type domain. Residues Thr-32–Trp-51 constitute a DNA-binding region (H-T-H motif).

This is an uncharacterized protein from Mycobacterium bovis (strain ATCC BAA-935 / AF2122/97).